Reading from the N-terminus, the 101-residue chain is Small ribosomal subunit protein bS6 (101 aa).

This sequence belongs to the bacterial ribosomal protein bS6 family.

Functionally, binds together with bS18 to 16S ribosomal RNA. The chain is Small ribosomal subunit protein bS6 from Nitratidesulfovibrio vulgaris (strain DSM 19637 / Miyazaki F) (Desulfovibrio vulgaris).